The sequence spans 338 residues: Lipoate-protein ligase A (338 aa).

Residues 29–216 (DPNQRVLFLW…AFFSHYGERV (188 aa)) form the BPL/LPL catalytic domain. Residues arginine 71, 76–79 (GAVF), and lysine 134 contribute to the ATP site. Lysine 134 is a binding site for (R)-lipoate.

It belongs to the LplA family. In terms of assembly, monomer.

The protein resides in the cytoplasm. The catalysed reaction is L-lysyl-[lipoyl-carrier protein] + (R)-lipoate + ATP = N(6)-[(R)-lipoyl]-L-lysyl-[lipoyl-carrier protein] + AMP + diphosphate + H(+). The protein operates within protein modification; protein lipoylation via exogenous pathway; protein N(6)-(lipoyl)lysine from lipoate: step 1/2. Its pathway is protein modification; protein lipoylation via exogenous pathway; protein N(6)-(lipoyl)lysine from lipoate: step 2/2. Functionally, catalyzes both the ATP-dependent activation of exogenously supplied lipoate to lipoyl-AMP and the transfer of the activated lipoyl onto the lipoyl domains of lipoate-dependent enzymes. This is Lipoate-protein ligase A from Aeromonas hydrophila subsp. hydrophila (strain ATCC 7966 / DSM 30187 / BCRC 13018 / CCUG 14551 / JCM 1027 / KCTC 2358 / NCIMB 9240 / NCTC 8049).